A 117-amino-acid polypeptide reads, in one-letter code: Large ribosomal subunit protein eL30B (117 aa).

Positions 1–14 are enriched in low complexity; that stretch reads MSAAPTTAPVAAVS. A disordered region spans residues 1–22; sequence MSAAPTTAPVAAVSKKGKKSGD.

Belongs to the eukaryotic ribosomal protein eL30 family. Component of the large ribosomal subunit (LSU). Mature yeast ribosomes consist of a small (40S) and a large (60S) subunit. The 40S small subunit contains 1 molecule of ribosomal RNA (18S rRNA) and at least 33 different proteins. The large 60S subunit contains 3 rRNA molecules (25S, 5.8S and 5S rRNA) and at least 46 different proteins.

It is found in the cytoplasm. Its function is as follows. Component of the ribosome, a large ribonucleoprotein complex responsible for the synthesis of proteins in the cell. The small ribosomal subunit (SSU) binds messenger RNAs (mRNAs) and translates the encoded message by selecting cognate aminoacyl-transfer RNA (tRNA) molecules. The large subunit (LSU) contains the ribosomal catalytic site termed the peptidyl transferase center (PTC), which catalyzes the formation of peptide bonds, thereby polymerizing the amino acids delivered by tRNAs into a polypeptide chain. The nascent polypeptides leave the ribosome through a tunnel in the LSU and interact with protein factors that function in enzymatic processing, targeting, and the membrane insertion of nascent chains at the exit of the ribosomal tunnel. The sequence is that of Large ribosomal subunit protein eL30B (rpl3002) from Schizosaccharomyces pombe (strain 972 / ATCC 24843) (Fission yeast).